The primary structure comprises 363 residues: Regulator of G-protein signaling rgs-3 (363 aa).

The tract at residues 1 to 70 (MWRSYKAETP…NSSATSPTPS (70 aa)) is disordered. Over residues 21–35 (LNLHDSSESDHEGRQ) the composition is skewed to basic and acidic residues. Low complexity-rich tracts occupy residues 36 to 50 (SRSASITSSTSAPAS) and 58 to 70 (PITNSSATSPTPS). 2 RGS domains span residues 112–225 (NCAN…LEYL) and 240–359 (SFEG…IDLL).

In terms of processing, may be phosphorylated and activated by egl-4.

Modulates chemotaxis responses by regulating positively the sensitivity to CO2 levels in BAG neurons and by regulating negatively the sensitivity to quinine in ASH sensory neurons. This Caenorhabditis elegans protein is Regulator of G-protein signaling rgs-3 (rgs-3).